A 639-amino-acid polypeptide reads, in one-letter code: Poly(A)-specific ribonuclease PARN (639 aa).

Positions 28 and 30 each coordinate a divalent metal cation. Phosphoserine is present on residues Ser163 and Ser167. The region spanning 178–245 (KKFIDQVVEK…ERYIVISKVD (68 aa)) is the R3H domain. An N6-acetyllysine modification is found at Lys220. Residues Asp292 and Asp382 each coordinate a divalent metal cation. N6-acetyllysine is present on Lys499. Position 530 is a phosphoserine (Ser530). Ser557 bears the Phosphoserine; by MAPKAPK2 mark. Residues 560-639 (APSTVGKRNL…ATLFEVPDTW (80 aa)) are disordered. Residues Ser583 and Ser587 each carry the phosphoserine modification. Residues 606-615 (KKAKKLKRMK) show a composition bias toward basic residues. Ser619, Ser623, and Ser628 each carry phosphoserine. A Phosphothreonine modification is found at Thr631.

Belongs to the CAF1 family. Homodimer. Found in a mRNA decay complex with RENT1, RENT2 and RENT3B. Interacts with KHSRP. Interacts with CELF1/CUGBP1. Interacts with ZC3HAV1 in an RNA-independent manner. Interacts with DHX36. Mg(2+) serves as cofactor. Phosphorylation by MAPKAPK2, preventing GADD45A mRNA degradation after genotoxic stress. Ubiquitous.

It localises to the nucleus. The protein resides in the cytoplasm. It is found in the nucleolus. The catalysed reaction is Exonucleolytic cleavage of poly(A) to 5'-AMP.. Its function is as follows. 3'-exoribonuclease that has a preference for poly(A) tails of mRNAs, thereby efficiently degrading poly(A) tails. Exonucleolytic degradation of the poly(A) tail is often the first step in the decay of eukaryotic mRNAs and is also used to silence certain maternal mRNAs translationally during oocyte maturation and early embryonic development. Interacts with both the 3'-end poly(A) tail and the 5'-end cap structure during degradation, the interaction with the cap structure being required for an efficient degradation of poly(A) tails. Involved in nonsense-mediated mRNA decay, a critical process of selective degradation of mRNAs that contain premature stop codons. Also involved in degradation of inherently unstable mRNAs that contain AU-rich elements (AREs) in their 3'-UTR, possibly via its interaction with KHSRP. Probably mediates the removal of poly(A) tails of AREs mRNAs, which constitutes the first step of destabilization. Also able to recognize and trim poly(A) tails of microRNAs such as MIR21 and H/ACA box snoRNAs (small nucleolar RNAs) leading to microRNAs degradation or snoRNA increased stability. The chain is Poly(A)-specific ribonuclease PARN (PARN) from Homo sapiens (Human).